The primary structure comprises 118 residues: Large ribosomal subunit protein uL18 (118 aa).

Belongs to the universal ribosomal protein uL18 family. In terms of assembly, part of the 50S ribosomal subunit; part of the 5S rRNA/L5/L18/L25 subcomplex. Contacts the 5S and 23S rRNAs.

Its function is as follows. This is one of the proteins that bind and probably mediate the attachment of the 5S RNA into the large ribosomal subunit, where it forms part of the central protuberance. The polypeptide is Large ribosomal subunit protein uL18 (Rickettsia prowazekii (strain Madrid E)).